The following is a 189-amino-acid chain: uncharacterized protein (189 aa).

One can recognise an HTH tetR-type domain in the interval 9–69 (ADTGGRILRA…SMLTSHIAAV (61 aa)). Residues 32–51 (TLAEIARRAGVSRPTVYRRW) constitute a DNA-binding region (H-T-H motif).

This is an uncharacterized protein from Mycobacterium bovis (strain ATCC BAA-935 / AF2122/97).